Reading from the N-terminus, the 359-residue chain is Phospho-N-acetylmuramoyl-pentapeptide-transferase (359 aa).

10 helical membrane passes run 3 to 23, 55 to 75, 80 to 100, 117 to 137, 156 to 176, 187 to 207, 231 to 251, 255 to 275, 280 to 300, and 334 to 354; these read QIMIAVAIAVAVSILLTPALI, VAILAGIWAGYFGTHLAGLAF, ITASGLLVLGLATSLGGVGFL, TAKTVGQITSAVLFAVLVLQF, IATVTLTPALFVLFCVLVVSA, LDGLAAGCMAMVTGAYVLITF, LALIAAATAGACIGFLWWNAA, IFMGDTGSLALGGIIAGLSVT, ILAVVLGALFVAEITSVVLQI, and FWLLTAITCGLGVALFYGEWL.

Belongs to the glycosyltransferase 4 family. MraY subfamily. Mg(2+) is required as a cofactor.

The protein resides in the cell membrane. The catalysed reaction is UDP-N-acetyl-alpha-D-muramoyl-L-alanyl-gamma-D-glutamyl-meso-2,6-diaminopimeloyl-D-alanyl-D-alanine + di-trans,octa-cis-undecaprenyl phosphate = di-trans,octa-cis-undecaprenyl diphospho-N-acetyl-alpha-D-muramoyl-L-alanyl-D-glutamyl-meso-2,6-diaminopimeloyl-D-alanyl-D-alanine + UMP. It participates in cell wall biogenesis; peptidoglycan biosynthesis. In terms of biological role, catalyzes the initial step of the lipid cycle reactions in the biosynthesis of the cell wall peptidoglycan: transfers peptidoglycan precursor phospho-MurNAc-pentapeptide from UDP-MurNAc-pentapeptide onto the lipid carrier undecaprenyl phosphate, yielding undecaprenyl-pyrophosphoryl-MurNAc-pentapeptide, known as lipid I. In Mycobacterium ulcerans (strain Agy99), this protein is Phospho-N-acetylmuramoyl-pentapeptide-transferase.